The primary structure comprises 189 residues: Cytochrome b6-f complex subunit 4 (189 aa).

3 helical membrane passes run Leu-36–Val-56, Leu-103–Glu-123, and Thr-139–Ile-159.

Belongs to the cytochrome b family. PetD subfamily. As to quaternary structure, the 4 large subunits of the cytochrome b6-f complex are cytochrome b6, subunit IV (17 kDa polypeptide, petD), cytochrome f and the Rieske protein, while the 4 small subunits are petG, petL, petM and petN. The complex functions as a dimer.

Its subcellular location is the plastid. The protein resides in the chloroplast thylakoid membrane. Its function is as follows. Component of the cytochrome b6-f complex, which mediates electron transfer between photosystem II (PSII) and photosystem I (PSI), cyclic electron flow around PSI, and state transitions. In Pinus koraiensis (Korean pine), this protein is Cytochrome b6-f complex subunit 4.